We begin with the raw amino-acid sequence, 592 residues long: Arginine--tRNA ligase (592 aa).

The 'HIGH' region motif lies at 139-149; sequence ANPNGPLHIGH.

Belongs to the class-I aminoacyl-tRNA synthetase family.

It localises to the cytoplasm. The enzyme catalyses tRNA(Arg) + L-arginine + ATP = L-arginyl-tRNA(Arg) + AMP + diphosphate. This chain is Arginine--tRNA ligase, found in Methanopyrus kandleri (strain AV19 / DSM 6324 / JCM 9639 / NBRC 100938).